The following is a 321-amino-acid chain: Phospho-N-acetylmuramoyl-pentapeptide-transferase (321 aa).

Transmembrane regions (helical) follow at residues 1-21 (MLFI…PILI), 50-70 (MGGL…IFFV), 76-96 (IILL…DDYI), 112-132 (FLAQ…FHLV), 140-160 (IPFT…IVFW), 176-196 (GLAT…SFVL), 200-220 (AIGA…PYNL), 225-245 (VFMG…ISIM), 250-270 (LSLL…MLQV), and 300-320 (VVTV…WIGV).

This sequence belongs to the glycosyltransferase 4 family. MraY subfamily. Requires Mg(2+) as cofactor.

The protein localises to the cell membrane. The enzyme catalyses UDP-N-acetyl-alpha-D-muramoyl-L-alanyl-gamma-D-glutamyl-L-lysyl-D-alanyl-D-alanine + di-trans,octa-cis-undecaprenyl phosphate = Mur2Ac(oyl-L-Ala-gamma-D-Glu-L-Lys-D-Ala-D-Ala)-di-trans,octa-cis-undecaprenyl diphosphate + UMP. It functions in the pathway cell wall biogenesis; peptidoglycan biosynthesis. Its function is as follows. Catalyzes the initial step of the lipid cycle reactions in the biosynthesis of the cell wall peptidoglycan: transfers peptidoglycan precursor phospho-MurNAc-pentapeptide from UDP-MurNAc-pentapeptide onto the lipid carrier undecaprenyl phosphate, yielding undecaprenyl-pyrophosphoryl-MurNAc-pentapeptide, known as lipid I. The protein is Phospho-N-acetylmuramoyl-pentapeptide-transferase of Staphylococcus haemolyticus (strain JCSC1435).